Reading from the N-terminus, the 238-residue chain is MTDQPVSRTALVLFSGGQDSATCLAWALQRFAHVETLGFDYGQRHAIELDCRDALLAGMTSLRPDWAEKLGEGHTLAIPTLAEISDTALTRNVAIEMGEGGLPNTFVPGRNLVFLTFAAALAYRRGMTDIVGGMCETDYSGYPDCRDDTIKALQTALNLGMDKQFELHTPLMWLDKAATWALAHELGGAGLVDLIREHSHTCYLGERGARHDWGYGCGECPACRLRAKGWCEYVARAV.

Residue 14 to 24 (FSGGQDSATCL) participates in ATP binding. Zn(2+) contacts are provided by cysteine 202, cysteine 217, cysteine 220, and cysteine 223.

Belongs to the QueC family. It depends on Zn(2+) as a cofactor.

The enzyme catalyses 7-carboxy-7-deazaguanine + NH4(+) + ATP = 7-cyano-7-deazaguanine + ADP + phosphate + H2O + H(+). It participates in purine metabolism; 7-cyano-7-deazaguanine biosynthesis. Functionally, catalyzes the ATP-dependent conversion of 7-carboxy-7-deazaguanine (CDG) to 7-cyano-7-deazaguanine (preQ(0)). This is 7-cyano-7-deazaguanine synthase from Nitrobacter hamburgensis (strain DSM 10229 / NCIMB 13809 / X14).